Consider the following 114-residue polypeptide: PDZK1-interacting protein 1 (114 aa).

Topologically, residues 1–28 are extracellular; it reads MSVLSLVVLSLLMALPPASCQQGRGNLQ. A helical transmembrane segment spans residues 29-51; that stretch reads PWMQGLIAVAVFLVLVAIAFAVN. The Cytoplasmic portion of the chain corresponds to 52-114; sequence HFWCQEKPAP…EEGKVCSTPM (63 aa). Phosphoserine is present on Ser85.

It belongs to the PDZK1-interacting protein 1/SMIM24 family. In terms of assembly, forms a heterodimer (via N-terminal transmembrane helix) with SLC5A2/SGLT2 (via TM13); this interaction enhances SLC5A2 transporter activity. Interacts with PDZK1.

Its subcellular location is the apical cell membrane. Functionally, auxiliary protein of electrogenic Na(+)-coupled sugar symporter SLC5A2/SGLT2 and SLC5A1/SGLT1. Essential for the transporter activity of SLC5A2/SGLT2 but not SLC5A1/SGLT1. In Bos taurus (Bovine), this protein is PDZK1-interacting protein 1.